We begin with the raw amino-acid sequence, 232 residues long: Phosphatidylserine decarboxylase proenzyme (232 aa).

The Schiff-base intermediate with substrate; via pyruvic acid role is filled by serine 190. The residue at position 190 (serine 190) is a Pyruvic acid (Ser); by autocatalysis.

It belongs to the phosphatidylserine decarboxylase family. PSD-A subfamily. Heterodimer of a large membrane-associated beta subunit and a small pyruvoyl-containing alpha subunit. Pyruvate is required as a cofactor. Is synthesized initially as an inactive proenzyme. Formation of the active enzyme involves a self-maturation process in which the active site pyruvoyl group is generated from an internal serine residue via an autocatalytic post-translational modification. Two non-identical subunits are generated from the proenzyme in this reaction, and the pyruvate is formed at the N-terminus of the alpha chain, which is derived from the carboxyl end of the proenzyme. The post-translation cleavage follows an unusual pathway, termed non-hydrolytic serinolysis, in which the side chain hydroxyl group of the serine supplies its oxygen atom to form the C-terminus of the beta chain, while the remainder of the serine residue undergoes an oxidative deamination to produce ammonia and the pyruvoyl prosthetic group on the alpha chain.

It localises to the cell membrane. It carries out the reaction a 1,2-diacyl-sn-glycero-3-phospho-L-serine + H(+) = a 1,2-diacyl-sn-glycero-3-phosphoethanolamine + CO2. It functions in the pathway phospholipid metabolism; phosphatidylethanolamine biosynthesis; phosphatidylethanolamine from CDP-diacylglycerol: step 2/2. In terms of biological role, catalyzes the formation of phosphatidylethanolamine (PtdEtn) from phosphatidylserine (PtdSer). The protein is Phosphatidylserine decarboxylase proenzyme of Cereibacter sphaeroides (strain ATCC 17025 / ATH 2.4.3) (Rhodobacter sphaeroides).